The chain runs to 417 residues: Serine hydroxymethyltransferase (417 aa).

Residues leucine 120 and glycine 124 to leucine 126 contribute to the (6S)-5,6,7,8-tetrahydrofolate site. Lysine 229 is modified (N6-(pyridoxal phosphate)lysine).

Belongs to the SHMT family. In terms of assembly, homodimer. Pyridoxal 5'-phosphate serves as cofactor.

The protein localises to the cytoplasm. It carries out the reaction (6R)-5,10-methylene-5,6,7,8-tetrahydrofolate + glycine + H2O = (6S)-5,6,7,8-tetrahydrofolate + L-serine. Its pathway is one-carbon metabolism; tetrahydrofolate interconversion. It functions in the pathway amino-acid biosynthesis; glycine biosynthesis; glycine from L-serine: step 1/1. Catalyzes the reversible interconversion of serine and glycine with tetrahydrofolate (THF) serving as the one-carbon carrier. This reaction serves as the major source of one-carbon groups required for the biosynthesis of purines, thymidylate, methionine, and other important biomolecules. Also exhibits THF-independent aldolase activity toward beta-hydroxyamino acids, producing glycine and aldehydes, via a retro-aldol mechanism. In Anaeromyxobacter sp. (strain Fw109-5), this protein is Serine hydroxymethyltransferase.